The sequence spans 93 residues: Phosphoribosyl-ATP pyrophosphatase (93 aa).

Belongs to the PRA-PH family.

It is found in the cytoplasm. The catalysed reaction is 1-(5-phospho-beta-D-ribosyl)-ATP + H2O = 1-(5-phospho-beta-D-ribosyl)-5'-AMP + diphosphate + H(+). It functions in the pathway amino-acid biosynthesis; L-histidine biosynthesis; L-histidine from 5-phospho-alpha-D-ribose 1-diphosphate: step 2/9. The protein is Phosphoribosyl-ATP pyrophosphatase of Metallosphaera sedula (strain ATCC 51363 / DSM 5348 / JCM 9185 / NBRC 15509 / TH2).